The following is a 296-amino-acid chain: Protease HtpX homolog (296 aa).

The next 2 helical transmembrane spans lie at Val14–Leu34 and Tyr39–Phe59. His143 serves as a coordination point for Zn(2+). The active site involves Glu144. A Zn(2+)-binding site is contributed by His147. 2 helical membrane-spanning segments follow: residues Ile158–Phe178 and Ile195–Val215. Glu224 serves as a coordination point for Zn(2+).

This sequence belongs to the peptidase M48B family. Zn(2+) is required as a cofactor.

Its subcellular location is the cell membrane. This is Protease HtpX homolog from Streptococcus agalactiae serotype Ia (strain ATCC 27591 / A909 / CDC SS700).